A 363-amino-acid chain; its full sequence is 3-dehydroquinate synthase (363 aa).

NAD(+) contacts are provided by residues 134–135, Lys147, Lys156, and 174–177; these read TT and TLIT. 3 residues coordinate Zn(2+): Glu189, His254, and His271.

Belongs to the sugar phosphate cyclases superfamily. Dehydroquinate synthase family. NAD(+) is required as a cofactor. Requires Co(2+) as cofactor. The cofactor is Zn(2+).

It localises to the cytoplasm. The catalysed reaction is 7-phospho-2-dehydro-3-deoxy-D-arabino-heptonate = 3-dehydroquinate + phosphate. Its pathway is metabolic intermediate biosynthesis; chorismate biosynthesis; chorismate from D-erythrose 4-phosphate and phosphoenolpyruvate: step 2/7. Functionally, catalyzes the conversion of 3-deoxy-D-arabino-heptulosonate 7-phosphate (DAHP) to dehydroquinate (DHQ). The sequence is that of 3-dehydroquinate synthase from Prochlorococcus marinus subsp. pastoris (strain CCMP1986 / NIES-2087 / MED4).